Reading from the N-terminus, the 352-residue chain is Homeobox protein Mohawk (352 aa).

The segment at 19 to 53 is disordered; sequence GASERERGGRPYSGVLDSPHARPEVGIADGPPLKD. Positions 71–132 form a DNA-binding region, homeobox; TALE-type; sequence VRHKRQALQD…NARRRLKNTV (62 aa). Disordered regions lie at residues 157-194 and 245-272; these read LSVS…IKSE and TRQR…SETE.

This sequence belongs to the TALE/IRO homeobox family.

It localises to the nucleus. In terms of biological role, may act as a morphogenetic regulator of cell adhesion. The protein is Homeobox protein Mohawk (MKX) of Pongo abelii (Sumatran orangutan).